A 92-amino-acid chain; its full sequence is Putative defensin-like protein 225 (92 aa).

Residues 1–26 (MKYGVLFMVSCGVMFLILSHVEEVEA) form the signal peptide. 3 cysteine pairs are disulfide-bonded: cysteine 32–cysteine 92, cysteine 42–cysteine 70, and cysteine 68–cysteine 88.

It belongs to the DEFL family.

Its subcellular location is the secreted. The polypeptide is Putative defensin-like protein 225 (SCRL1) (Arabidopsis thaliana (Mouse-ear cress)).